The chain runs to 90 residues: Small ribosomal subunit protein uS15c (90 aa).

This sequence belongs to the universal ribosomal protein uS15 family. In terms of assembly, part of the 30S ribosomal subunit.

The protein localises to the plastid. Its subcellular location is the chloroplast. This is Small ribosomal subunit protein uS15c (rps15) from Dioscorea elephantipes (Elephant's foot yam).